A 396-amino-acid chain; its full sequence is Na(+)/H(+) antiporter NhaA 1 (396 aa).

The next 11 membrane-spanning stretches (helical) occupy residues Ala-15–Leu-35, Leu-60–Leu-80, Phe-96–Ile-116, Gly-126–Gly-146, Ile-155–Phe-175, Ala-179–Cys-199, Ile-207–Ala-227, Ser-255–Val-275, Pro-290–Leu-312, Leu-329–Leu-349, and Leu-363–Val-383.

The protein belongs to the NhaA Na(+)/H(+) (TC 2.A.33) antiporter family.

The protein localises to the cell inner membrane. The enzyme catalyses Na(+)(in) + 2 H(+)(out) = Na(+)(out) + 2 H(+)(in). Na(+)/H(+) antiporter that extrudes sodium in exchange for external protons. The sequence is that of Na(+)/H(+) antiporter NhaA 1 from Campylobacter hominis (strain ATCC BAA-381 / DSM 21671 / CCUG 45161 / LMG 19568 / NCTC 13146 / CH001A).